The sequence spans 445 residues: Chromosome partition protein MukF (445 aa).

Residues 213–241 (LSETSATLKELQDTLQAAGDELQTQILDI) are leucine-zipper.

Belongs to the MukF family. In terms of assembly, interacts, and probably forms a ternary complex, with MukE and MukB via its C-terminal region. The complex formation is stimulated by calcium or magnesium. It is required for an interaction between MukE and MukB.

The protein localises to the cytoplasm. It localises to the nucleoid. Involved in chromosome condensation, segregation and cell cycle progression. May participate in facilitating chromosome segregation by condensation DNA from both sides of a centrally located replisome during cell division. Not required for mini-F plasmid partitioning. Probably acts via its interaction with MukB and MukE. Overexpression results in anucleate cells. It has a calcium binding activity. The polypeptide is Chromosome partition protein MukF (Vibrio atlanticus (strain LGP32) (Vibrio splendidus (strain Mel32))).